Reading from the N-terminus, the 537-residue chain is MDCKVVSLNEKDQFIPKIKSSDPVITGLFQYDAAQQTSFEKRMSKENNGREAALANVIREYMSDLKLSNEQELNIQHLANGSKVVIGGQQAGLFGGPLYTFHKIFSIITLSKELTDTHKQQVVPVFWIAGEDHDFDEVNHTFVYNENHGSLHKVKYHTMEMPETTVSRYYPDKAELKQTLKTMFIHMKETVHTQGLLEICDRIIDQYDSWTDMFKALLHETFKAYGVLFIDAQFEPLRKMEAPMFKKILKKHQLLDDAFRATQQRTQNQGLNAMIQTDTNVHLFLHDENMRQLVSYDGKHFKLNKTDKTYIKEEIINIAENQPELFSNNVVTRPLMEEWLFNTVAFVGGPSEIKYWAELKDVFELFDVEMPIVMPRLRITYLNDRIEKLLSKYNIPLEKVLVDGVEGERSKFIREQASHQFIEKVEGMIEQQRRLNKDLLDEVAGNQNNINLVNKNNEIHIQQYDYLLKRYLLNIERENDISMKQFREIQETLHPMGGLQERIWNPLQILNDFGTDVFKPSTYPPLSYTFDHIIIKP.

Residues 422–450 (IEKVEGMIEQQRRLNKDLLDEVAGNQNNI) adopt a coiled-coil conformation.

This sequence belongs to the BshC family.

Functionally, involved in bacillithiol (BSH) biosynthesis. May catalyze the last step of the pathway, the addition of cysteine to glucosamine malate (GlcN-Mal) to generate BSH. The protein is Putative cysteine ligase BshC of Staphylococcus aureus (strain Mu3 / ATCC 700698).